Reading from the N-terminus, the 1389-residue chain is DNA-directed RNA polymerase subunit beta'' (1389 aa).

The Zn(2+) site is built by C220, C290, C297, and C300.

The protein belongs to the RNA polymerase beta' chain family. RpoC2 subfamily. As to quaternary structure, in plastids the minimal PEP RNA polymerase catalytic core is composed of four subunits: alpha, beta, beta', and beta''. When a (nuclear-encoded) sigma factor is associated with the core the holoenzyme is formed, which can initiate transcription. The cofactor is Zn(2+).

The protein resides in the plastid. Its subcellular location is the chloroplast. It catalyses the reaction RNA(n) + a ribonucleoside 5'-triphosphate = RNA(n+1) + diphosphate. Functionally, DNA-dependent RNA polymerase catalyzes the transcription of DNA into RNA using the four ribonucleoside triphosphates as substrates. The sequence is that of DNA-directed RNA polymerase subunit beta'' from Chloranthus spicatus (Chulantree).